The primary structure comprises 1022 residues: Probable beta-galactosidase B (1022 aa).

Residues 1–20 (MARFPQLLFLLLASIGLLSA) form the signal peptide. The N-linked (GlcNAc...) asparagine glycan is linked to N23. Residue Y90 participates in substrate binding. N-linked (GlcNAc...) asparagine glycosylation is present at N100. Positions 135, 136, 137, and 195 each coordinate substrate. The active-site Proton donor is E196. N211 is a glycosylation site (N-linked (GlcNAc...) asparagine). Y265 serves as a coordination point for substrate. C271 and C324 are joined by a disulfide. The active-site Nucleophile is E308. Y373 is a substrate binding site. Residues N411, N456, N541, N554, N626, N777, N790, N832, N880, and N881 are each glycosylated (N-linked (GlcNAc...) asparagine).

This sequence belongs to the glycosyl hydrolase 35 family.

It is found in the secreted. The enzyme catalyses Hydrolysis of terminal non-reducing beta-D-galactose residues in beta-D-galactosides.. Cleaves beta-linked terminal galactosyl residues from gangliosides, glycoproteins, and glycosaminoglycans. This chain is Probable beta-galactosidase B (lacB), found in Aspergillus terreus (strain NIH 2624 / FGSC A1156).